A 91-amino-acid polypeptide reads, in one-letter code: Protein RacC (91 aa).

The protein is Protein RacC (racC) of Escherichia coli (strain K12).